Reading from the N-terminus, the 338-residue chain is UbiA prenyltransferase domain-containing protein 1 (338 aa).

Residues 1 to 39 are disordered; sequence MAAVQAPGEKINIQAGETTQVGDTDQQRNDWPEEDRLPE. N-acetylalanine is present on A2. The span at 15–24 shows a compositional bias: polar residues; that stretch reads AGETTQVGDT. The span at 25–39 shows a compositional bias: basic and acidic residues; it reads DQQRNDWPEEDRLPE. 8 helical membrane-spanning segments follow: residues 83 to 103, 134 to 154, 160 to 180, 188 to 208, 209 to 229, 245 to 267, 277 to 297, and 315 to 335; these read LLLGCAVAVLAVHGAGNLVNT, FGVFLYTLGCVCAAYLYYLST, LALIYFGGLSGSFLYTGGIGF, LVILITFGPLAVMFAYAVQVG, SLAIFPLVYAIPLALSTEAIL, IVTLAILIGPTLSYILYNTLLFL, THCSISLALPLLTSPMAFSLE, and LNLLLGLFYVFGIILAPAGSL.

Belongs to the UbiA prenyltransferase family. As to quaternary structure, interacts with HMGCR and SOAT1.

The protein localises to the endoplasmic reticulum membrane. It localises to the golgi apparatus membrane. It is found in the mitochondrion membrane. It catalyses the reaction menadiol + (2E,6E,10E)-geranylgeranyl diphosphate = menaquinol-4 + diphosphate. The enzyme catalyses all-trans-decaprenyl diphosphate + 4-hydroxybenzoate = 4-hydroxy-3-(all-trans-decaprenyl)benzoate + diphosphate. The protein operates within quinol/quinone metabolism; menaquinone biosynthesis. It functions in the pathway cofactor biosynthesis; ubiquinone biosynthesis. In terms of biological role, prenyltransferase that mediates the formation of menaquinone-4 (MK-4) and coenzyme Q10. MK-4 is a vitamin K2 isoform required for endothelial cell development. Mediates the conversion of phylloquinone (PK) into MK-4, probably by cleaving the side chain of phylloquinone (PK) to release 2-methyl-1,4-naphthoquinone (menadione; K3) and then prenylating it with geranylgeranyl pyrophosphate (GGPP) to form MK-4. Also plays a role in cardiovascular development independently of MK-4 biosynthesis, by acting as a coenzyme Q10 biosynthetic enzyme: coenzyme Q10, also named ubiquinone, plays an important antioxidant role in the cardiovascular system. Mediates biosynthesis of coenzyme Q10 in the Golgi membrane, leading to protect cardiovascular tissues from NOS3/eNOS-dependent oxidative stress. This chain is UbiA prenyltransferase domain-containing protein 1 (Ubiad1), found in Rattus norvegicus (Rat).